Reading from the N-terminus, the 174-residue chain is ATP synthase subunit b (174 aa).

The helical transmembrane segment at Ile-18–Gly-38 threads the bilayer.

It belongs to the ATPase B chain family. As to quaternary structure, F-type ATPases have 2 components, F(1) - the catalytic core - and F(0) - the membrane proton channel. F(1) has five subunits: alpha(3), beta(3), gamma(1), delta(1), epsilon(1). F(0) has three main subunits: a(1), b(2) and c(10-14). The alpha and beta chains form an alternating ring which encloses part of the gamma chain. F(1) is attached to F(0) by a central stalk formed by the gamma and epsilon chains, while a peripheral stalk is formed by the delta and b chains.

It is found in the cell membrane. Functionally, f(1)F(0) ATP synthase produces ATP from ADP in the presence of a proton or sodium gradient. F-type ATPases consist of two structural domains, F(1) containing the extramembraneous catalytic core and F(0) containing the membrane proton channel, linked together by a central stalk and a peripheral stalk. During catalysis, ATP synthesis in the catalytic domain of F(1) is coupled via a rotary mechanism of the central stalk subunits to proton translocation. In terms of biological role, component of the F(0) channel, it forms part of the peripheral stalk, linking F(1) to F(0). The sequence is that of ATP synthase subunit b from Enterococcus hirae (strain ATCC 9790 / DSM 20160 / JCM 8729 / LMG 6399 / NBRC 3181 / NCIMB 6459 / NCDO 1258 / NCTC 12367 / WDCM 00089 / R).